The sequence spans 260 residues: BTB/POZ domain-containing protein KCTD21 (260 aa).

In terms of domain architecture, BTB spans 3–72 (DPITLNVGGK…LRTSHLDLPE (70 aa)). A coiled-coil region spans residues 88–112 (QVQPLIEALQEKEVELSKAEKNAML).

As to quaternary structure, homopentamer. Interacts with KCTD11; KCTD21 and KCTD11 may associate in pentameric assemblies. Interacts (via BTB domain) with CUL3; indicative for a participation in a BCR (BTB-CUL3-RBX1) E3 ubiquitin-protein ligase complex. Highly expressed in cerebellum and brain. Expression is down-regulated in medulloblastoma.

It participates in protein modification; protein ubiquitination. Probable substrate-specific adapter of a BCR (BTB-CUL3-RBX1) E3 ubiquitin-protein ligase complex mediating the ubiquitination and subsequent proteasomal degradation of target proteins. Promotes the ubiquitination of HDAC1. Can function as antagonist of the Hedgehog pathway by affecting the nuclear transfer of transcription factor GLI1; the function probably occurs via HDAC1 down-regulation, keeping GLI1 acetylated and inactive. Inhibits cell growth and tumorigenicity of medulloblastoma (MDB). The chain is BTB/POZ domain-containing protein KCTD21 (KCTD21) from Homo sapiens (Human).